Here is a 67-residue protein sequence, read N- to C-terminus: Large ribosomal subunit protein bL35 (67 aa).

This sequence belongs to the bacterial ribosomal protein bL35 family.

The sequence is that of Large ribosomal subunit protein bL35 from Caldanaerobacter subterraneus subsp. tengcongensis (strain DSM 15242 / JCM 11007 / NBRC 100824 / MB4) (Thermoanaerobacter tengcongensis).